Consider the following 542-residue polypeptide: Bifunctional pantoate ligase/cytidylate kinase (542 aa).

Residues Met1 to Leu280 form a pantoate--beta-alanine ligase region. Residue Met28–His35 coordinates ATP. The Proton donor role is filled by His35. Gln59 is a binding site for (R)-pantoate. A beta-alanine-binding site is contributed by Gln59. Gly150 to Asp153 is a binding site for ATP. Gln156 serves as a coordination point for (R)-pantoate. Residues Val179 and Cys187–Arg190 contribute to the ATP site. A cytidylate kinase region spans residues Leu281–Gln542. A disordered region spans residues Gly287–Pro311.

It in the N-terminal section; belongs to the pantothenate synthetase family. In the C-terminal section; belongs to the cytidylate kinase family. Type 1 subfamily.

Its subcellular location is the cytoplasm. It catalyses the reaction (R)-pantoate + beta-alanine + ATP = (R)-pantothenate + AMP + diphosphate + H(+). It carries out the reaction CMP + ATP = CDP + ADP. The catalysed reaction is dCMP + ATP = dCDP + ADP. It participates in cofactor biosynthesis; (R)-pantothenate biosynthesis; (R)-pantothenate from (R)-pantoate and beta-alanine: step 1/1. Catalyzes the condensation of pantoate with beta-alanine in an ATP-dependent reaction via a pantoyl-adenylate intermediate. Functionally, catalyzes the transfer of a phosphate group from ATP to either CMP or dCMP to form CDP or dCDP and ADP, respectively. This is Bifunctional pantoate ligase/cytidylate kinase from Synechococcus sp. (strain JA-2-3B'a(2-13)) (Cyanobacteria bacterium Yellowstone B-Prime).